Consider the following 462-residue polypeptide: Cysteine--tRNA ligase (462 aa).

Zn(2+) is bound at residue cysteine 28. The short motif at 30-40 is the 'HIGH' region element; sequence MTVYDYCHLGH. Positions 209, 234, and 238 each coordinate Zn(2+). Residues 266-270 carry the 'KMSKS' region motif; that stretch reads KMAKS. Lysine 269 provides a ligand contact to ATP.

The protein belongs to the class-I aminoacyl-tRNA synthetase family. In terms of assembly, monomer. It depends on Zn(2+) as a cofactor.

The protein resides in the cytoplasm. It catalyses the reaction tRNA(Cys) + L-cysteine + ATP = L-cysteinyl-tRNA(Cys) + AMP + diphosphate. This Alkalilimnicola ehrlichii (strain ATCC BAA-1101 / DSM 17681 / MLHE-1) protein is Cysteine--tRNA ligase.